The primary structure comprises 1070 residues: DNA-directed RNA polymerase subunit beta (1070 aa).

Belongs to the RNA polymerase beta chain family. In terms of assembly, in plastids the minimal PEP RNA polymerase catalytic core is composed of four subunits: alpha, beta, beta', and beta''. When a (nuclear-encoded) sigma factor is associated with the core the holoenzyme is formed, which can initiate transcription.

The protein localises to the plastid. Its subcellular location is the chloroplast. The catalysed reaction is RNA(n) + a ribonucleoside 5'-triphosphate = RNA(n+1) + diphosphate. DNA-dependent RNA polymerase catalyzes the transcription of DNA into RNA using the four ribonucleoside triphosphates as substrates. In Platanus occidentalis (Sycamore), this protein is DNA-directed RNA polymerase subunit beta.